The sequence spans 311 residues: Ribosomal protein L11 methyltransferase (311 aa).

Positions 162, 183, 205, and 248 each coordinate S-adenosyl-L-methionine.

Belongs to the methyltransferase superfamily. PrmA family.

It localises to the cytoplasm. The enzyme catalyses L-lysyl-[protein] + 3 S-adenosyl-L-methionine = N(6),N(6),N(6)-trimethyl-L-lysyl-[protein] + 3 S-adenosyl-L-homocysteine + 3 H(+). In terms of biological role, methylates ribosomal protein L11. This Bacillus velezensis (strain DSM 23117 / BGSC 10A6 / LMG 26770 / FZB42) (Bacillus amyloliquefaciens subsp. plantarum) protein is Ribosomal protein L11 methyltransferase.